The chain runs to 430 residues: Glutamate-1-semialdehyde 2,1-aminomutase (430 aa).

Lysine 268 carries the post-translational modification N6-(pyridoxal phosphate)lysine.

This sequence belongs to the class-III pyridoxal-phosphate-dependent aminotransferase family. HemL subfamily. Homodimer. The cofactor is pyridoxal 5'-phosphate.

The protein resides in the cytoplasm. The enzyme catalyses (S)-4-amino-5-oxopentanoate = 5-aminolevulinate. Its pathway is porphyrin-containing compound metabolism; protoporphyrin-IX biosynthesis; 5-aminolevulinate from L-glutamyl-tRNA(Glu): step 2/2. The chain is Glutamate-1-semialdehyde 2,1-aminomutase (hemL) from Bacillus subtilis (strain 168).